The chain runs to 568 residues: Multidrug and toxin extrusion protein 1 (568 aa).

Met1 carries the post-translational modification N-acetylmethionine. The Cytoplasmic segment spans residues 1–36; that stretch reads MEAPVELGPGGRQASPERRHWLRCLVLSDFREELRA. Residues 37 to 57 traverse the membrane as a helical segment; that stretch reads LLVLACPAFLAQLMVFLISFV. The Extracellular segment spans residues 58 to 71; sequence SSVFCGHLSKLELN. The chain crosses the membrane as a helical span at residues 72 to 92; it reads AVTLAIAVINVMGVSVGFGLS. Topologically, residues 93-119 are cytoplasmic; sequence SACDTLISQTYGSRNLKHVGVILQRGS. Residues 120-140 form a helical membrane-spanning segment; the sequence is LILLLCCLPCWALFLNTQHIL. At 141-151 the chain is on the extracellular side; sequence LLFRQDPAVSR. The chain crosses the membrane as a helical span at residues 152 to 172; it reads LTQTYVTIFIPALPATFLYTL. The Cytoplasmic portion of the chain corresponds to 173–175; that stretch reads QVK. A helical membrane pass occupies residues 176–196; sequence YLLNQGIVLPQVVTGVAANLV. Residues 197–214 lie on the Extracellular side of the membrane; that stretch reads NALANYLFVYQLHLGVMG. A helical membrane pass occupies residues 215–235; sequence SALANTVAQFTLALLLFLYIL. Over 236–255 the chain is Cytoplasmic; sequence RSKVYQATWGGWSLECLQDW. Residues 256 to 278 form a helical membrane-spanning segment; sequence ASFFRLAIPSMLMLCMEWWAYEI. The Extracellular segment spans residues 279–294; that stretch reads GSFLSGILGMVELGAQ. A helical transmembrane segment spans residues 295-315; sequence SVTYELAVIVYMIPMGLSVAV. Residues 316–335 lie on the Cytoplasmic side of the membrane; it reads NVRVGNALGAGNIEQAKKSS. A helical transmembrane segment spans residues 336–356; sequence AVALLVTELIAVVFCVMLLSC. At 357-369 the chain is on the extracellular side; sequence KDLVGYIFTSDRD. A helical transmembrane segment spans residues 370–390; it reads IIALVAQVTPIYAVSHLFESL. At 391-407 the chain is on the cytoplasmic side; that stretch reads AGTSGGILRGSGNQKFG. The helical transmembrane segment at 408 to 430 threads the bilayer; sequence AIVNAIGYYVVGLPIGIALMFAA. At 431–433 the chain is on the extracellular side; that stretch reads KLG. A helical membrane pass occupies residues 434 to 456; that stretch reads VIGLWLGIVVCAVSQAVCFLGFI. Residues 457–544 are Cytoplasmic-facing; it reads ARLNWTKACQ…LSGKQLALRR (88 aa). A helical membrane pass occupies residues 545–565; it reads GLLLLGVILVLLAGILVKVYV. Over 566 to 568 the chain is Extracellular; it reads RTQ.

The protein belongs to the multi antimicrobial extrusion (MATE) (TC 2.A.66.1) family. Predominantly expressed in kidney and liver.

Its subcellular location is the cell membrane. The protein resides in the apical cell membrane. The enzyme catalyses thiamine(out) + H(+)(in) = thiamine(in) + H(+)(out). The catalysed reaction is estrone 3-sulfate(in) + H(+)(out) = estrone 3-sulfate(out) + H(+)(in). It catalyses the reaction creatinine(in) + H(+)(out) = creatinine(out) + H(+)(in). It carries out the reaction agmatine(in) + H(+)(out) = agmatine(out) + H(+)(in). In terms of biological role, multidrug efflux pump that functions as a H(+)/organic cation antiporter. Plays a physiological role in the excretion of cationic compounds including endogenous metabolites, drugs, toxins through the kidney and liver, into urine and bile respectively. Mediates the efflux of endogenous compounds such as creatinine, vitamin B1/thiamine, agmatine and estrone-3-sulfate. May also contribute to regulate the transport of cationic compounds in testis across the blood-testis-barrier. The sequence is that of Multidrug and toxin extrusion protein 1 (SLC47A1) from Oryctolagus cuniculus (Rabbit).